The sequence spans 141 residues: MATIKVDVVSAEEQIFSGQAKFVALPGEAGELGILPGHTPLITRIRPGAVRIEAENGEEEFVFVAGGILEIQPGAVTVLADTAIRGKDLDEAKAEDARKRAEEALQNTGSNLEYATAQAELAYATAQLAAIQRLRKLRGQN.

The protein belongs to the ATPase epsilon chain family. In terms of assembly, F-type ATPases have 2 components, CF(1) - the catalytic core - and CF(0) - the membrane proton channel. CF(1) has five subunits: alpha(3), beta(3), gamma(1), delta(1), epsilon(1). CF(0) has three main subunits: a, b and c.

The protein localises to the cell inner membrane. In terms of biological role, produces ATP from ADP in the presence of a proton gradient across the membrane. The chain is ATP synthase epsilon chain from Paraburkholderia phytofirmans (strain DSM 17436 / LMG 22146 / PsJN) (Burkholderia phytofirmans).